The chain runs to 371 residues: Galanin receptor type 2 (371 aa).

Residues 1 to 27 (MNGSDSQGAEDSSQEGGGGWQPEAVLV) are Extracellular-facing. Asparagine 2 carries an N-linked (GlcNAc...) asparagine glycan. Residues 28-48 (PLFFALIFLVGAVGNALVLAV) form a helical membrane-spanning segment. At 49–59 (LLRGGQAVSTT) the chain is on the cytoplasmic side. The chain crosses the membrane as a helical span at residues 60 to 80 (NLFILNLGVADLCFILCCVPF). Residues 81–98 (QATIYTLDDWVFGSLLCK) are Extracellular-facing. An intrachain disulfide couples cysteine 97 to cysteine 174. Residues 99–120 (AVHFLIFLTMHASSFTLAAVSL) form a helical membrane-spanning segment. The Cytoplasmic portion of the chain corresponds to 121 to 140 (DRYLAIRYPLHSRELRTPRN). A helical membrane pass occupies residues 141–161 (ALAAIGLIWGLALLFSGPYLS). At 162-186 (YYSQSQLANLTVCHPAWSAPRRRAM) the chain is on the extracellular side. The helical transmembrane segment at 187 to 207 (DLCTFVFSYLLPVLVLSLTYA) threads the bilayer. Residues 208 to 236 (RTLHYLWRTVDPVAAGSGSQRAKRKVTRM) are Cytoplasmic-facing. The chain crosses the membrane as a helical span at residues 237–257 (IVIVAVLFCLCWMPHHALILC). Residues 258–259 (VW) are Extracellular-facing. The helical transmembrane segment at 260 to 280 (FGRFPLTRATYALRILSHLVS) threads the bilayer. At 281 to 371 (YANSCVNPIV…TLSRTLDPAC (91 aa)) the chain is on the cytoplasmic side.

Belongs to the G-protein coupled receptor 1 family.

The protein localises to the cell membrane. Functionally, receptor for the hormone galanin, GALP and spexin-1. The activity of this receptor is mediated by G proteins that activate the phospholipase C/protein kinase C pathway (via G(q)) and that inhibit adenylyl cyclase (via G(i)). The chain is Galanin receptor type 2 (Galr2) from Mus musculus (Mouse).